A 355-amino-acid chain; its full sequence is UDP-N-acetylglucosamine--N-acetylmuramyl-(pentapeptide) pyrophosphoryl-undecaprenol N-acetylglucosamine transferase (355 aa).

UDP-N-acetyl-alpha-D-glucosamine-binding positions include 14–16 (TGG), Asn-126, Arg-162, Ser-190, Ile-243, 262–267 (ALTVSE), and Gln-287.

It belongs to the glycosyltransferase 28 family. MurG subfamily.

Its subcellular location is the cell inner membrane. The enzyme catalyses di-trans,octa-cis-undecaprenyl diphospho-N-acetyl-alpha-D-muramoyl-L-alanyl-D-glutamyl-meso-2,6-diaminopimeloyl-D-alanyl-D-alanine + UDP-N-acetyl-alpha-D-glucosamine = di-trans,octa-cis-undecaprenyl diphospho-[N-acetyl-alpha-D-glucosaminyl-(1-&gt;4)]-N-acetyl-alpha-D-muramoyl-L-alanyl-D-glutamyl-meso-2,6-diaminopimeloyl-D-alanyl-D-alanine + UDP + H(+). It participates in cell wall biogenesis; peptidoglycan biosynthesis. Functionally, cell wall formation. Catalyzes the transfer of a GlcNAc subunit on undecaprenyl-pyrophosphoryl-MurNAc-pentapeptide (lipid intermediate I) to form undecaprenyl-pyrophosphoryl-MurNAc-(pentapeptide)GlcNAc (lipid intermediate II). In Vibrio vulnificus (strain YJ016), this protein is UDP-N-acetylglucosamine--N-acetylmuramyl-(pentapeptide) pyrophosphoryl-undecaprenol N-acetylglucosamine transferase.